A 481-amino-acid polypeptide reads, in one-letter code: Glutamyl-tRNA(Gln) amidotransferase subunit A (481 aa).

Residues K74 and S149 each act as charge relay system in the active site. S173 (acyl-ester intermediate) is an active-site residue.

The protein belongs to the amidase family. GatA subfamily. As to quaternary structure, heterotrimer of A, B and C subunits.

It catalyses the reaction L-glutamyl-tRNA(Gln) + L-glutamine + ATP + H2O = L-glutaminyl-tRNA(Gln) + L-glutamate + ADP + phosphate + H(+). In terms of biological role, allows the formation of correctly charged Gln-tRNA(Gln) through the transamidation of misacylated Glu-tRNA(Gln) in organisms which lack glutaminyl-tRNA synthetase. The reaction takes place in the presence of glutamine and ATP through an activated gamma-phospho-Glu-tRNA(Gln). This chain is Glutamyl-tRNA(Gln) amidotransferase subunit A, found in Francisella tularensis subsp. holarctica (strain FTNF002-00 / FTA).